Consider the following 177-residue polypeptide: ADP-ribosylation factor-like protein 17 (177 aa).

Gly2 is lipidated: N-myristoyl glycine. GTP-binding positions include 24-31 (SLDTAGKT), 67-71 (DVGSH), and 125-128 (LPHS).

The protein belongs to the small GTPase superfamily. Arf family.

The protein resides in the golgi apparatus. In terms of biological role, GTP-binding protein that functions as an allosteric activator of the cholera toxin catalytic subunit, an ADP-ribosyltransferase. Involved in protein trafficking; may modulate vesicle budding and uncoating within the Golgi apparatus. The protein is ADP-ribosylation factor-like protein 17 (ARL17A) of Homo sapiens (Human).